The primary structure comprises 370 residues: Probable neutral protease 2 homolog ARB_03949 (370 aa).

The N-terminal stretch at M1 to A19 is a signal peptide. Residues Y20–R188 constitute a propeptide that is removed on maturation. 2 disulfides stabilise this stretch: C196/C267 and C274/C292. H316 contacts Zn(2+). E317 is an active-site residue. Zn(2+) contacts are provided by H320 and D331.

Belongs to the peptidase M35 family. Zn(2+) serves as cofactor.

Its subcellular location is the secreted. It catalyses the reaction Preferential cleavage of bonds with hydrophobic residues in P1'. Also 3-Asn-|-Gln-4 and 8-Gly-|-Ser-9 bonds in insulin B chain.. Its function is as follows. Probable secreted metalloprotease that shows high activities on basic nuclear substrates such as histone and protamine. May be involved in virulence. The sequence is that of Probable neutral protease 2 homolog ARB_03949 from Arthroderma benhamiae (strain ATCC MYA-4681 / CBS 112371) (Trichophyton mentagrophytes).